The sequence spans 161 residues: Nucleotide-binding protein PFL_4775 (161 aa).

It belongs to the YajQ family.

Nucleotide-binding protein. The sequence is that of Nucleotide-binding protein PFL_4775 from Pseudomonas fluorescens (strain ATCC BAA-477 / NRRL B-23932 / Pf-5).